Consider the following 415-residue polypeptide: Beta-1,4-glucuronyltransferase 1 (415 aa).

The Cytoplasmic segment spans residues 1–8 (MQMSYAIR). The chain crosses the membrane as a helical; Signal-anchor for type II membrane protein span at residues 9–36 (CAFYQLLLAALMLVAMLQLLYLSLLSGL). Topologically, residues 37-415 (HGQEEQDQYF…AKYPNSPRRC (379 aa)) are lumenal. An N-linked (GlcNAc...) asparagine glycan is attached at Asn204. The Mn(2+) site is built by Asp227 and Asp229. N-linked (GlcNAc...) asparagine glycosylation occurs at Asn300.

It belongs to the glycosyltransferase 49 family. In terms of assembly, interacts with LARGE1 and LARGE2. Requires Mn(2+) as cofactor.

The protein localises to the golgi apparatus membrane. It catalyses the reaction 3-O-[beta-D-Xyl-(1-&gt;4)-Rib-ol-P-Rib-ol-P-3-beta-D-GalNAc-(1-&gt;3)-beta-D-GlcNAc-(1-&gt;4)-(O-6-P-alpha-D-Man)]-Thr-[protein] + UDP-alpha-D-glucuronate = 3-O-[beta-D-GlcA-(1-&gt;3)-beta-D-Xyl-(1-&gt;4)-Rib-ol-P-Rib-ol-P-3-beta-D-GalNAc-(1-&gt;3)-beta-D-GlcNAc-(1-&gt;4)-(O-6-P-alpha-D-Man)]-Thr-[protein] + UDP + H(+). The protein operates within protein modification; protein glycosylation. Beta-1,4-glucuronyltransferase involved in O-mannosylation of alpha-dystroglycan (DAG1). Transfers a glucuronic acid (GlcA) residue onto a xylose (Xyl) acceptor to produce the glucuronyl-beta-1,4-xylose-beta disaccharide primer, which is further elongated by LARGE1, during synthesis of phosphorylated O-mannosyl glycan. Phosphorylated O-mannosyl glycan is a carbohydrate structure present in alpha-dystroglycan (DAG1), which is required for binding laminin G-like domain-containing extracellular proteins with high affinity. Required for axon guidance; via its function in O-mannosylation of alpha-dystroglycan (DAG1). The chain is Beta-1,4-glucuronyltransferase 1 from Pongo abelii (Sumatran orangutan).